Reading from the N-terminus, the 306-residue chain is MLPYIALILVCWSVLSQAAQTDVEGRADKRRPIWIMGHMVNAIAQIDEFVNLGANSIETDVSFDDNANPEYTYHGIPCDCGRSCLKWENFNDFLKGLRSATTPGNAKYQAKLILVVFDLKTGSLYDNQANEAGKKLAKNLLKHYWNNGNNGGRAYIVLSIPDLNHYPLIKGFKDQLTQDGHPELMDKVGHDFSGNDAIGDVGNAYKKAGISGHVWQSDGITNCLLRGLDRVKQATANRDSANGFINKVYYWTVDKRATTRDALDAGVDGVMTNYPDVITDVLNESAYKNKFRVASYEDNPWETFKK.

Residues 1 to 18 form the signal peptide; it reads MLPYIALILVCWSVLSQA. A propeptide spanning residues 19–26 is cleaved from the precursor; sequence AQTDVEGR. H38 is an active-site residue. 2 residues coordinate Mg(2+): E58 and D60. The Nucleophile role is filled by H74. Disulfide bonds link C78/C84 and C80/C223. Position 118 (D118) interacts with Mg(2+). Residue N283 is glycosylated (N-linked (GlcNAc...) asparagine).

It belongs to the arthropod phospholipase D family. Class II subfamily. Class IIa sub-subfamily. The cofactor is Mg(2+). As to expression, expressed by the venom gland.

Its subcellular location is the secreted. The enzyme catalyses an N-(acyl)-sphingosylphosphocholine = an N-(acyl)-sphingosyl-1,3-cyclic phosphate + choline. It catalyses the reaction an N-(acyl)-sphingosylphosphoethanolamine = an N-(acyl)-sphingosyl-1,3-cyclic phosphate + ethanolamine. The catalysed reaction is a 1-acyl-sn-glycero-3-phosphocholine = a 1-acyl-sn-glycero-2,3-cyclic phosphate + choline. It carries out the reaction a 1-acyl-sn-glycero-3-phosphoethanolamine = a 1-acyl-sn-glycero-2,3-cyclic phosphate + ethanolamine. Dermonecrotic toxins cleave the phosphodiester linkage between the phosphate and headgroup of certain phospholipids (sphingolipid and lysolipid substrates), forming an alcohol (often choline) and a cyclic phosphate. This toxin acts on sphingomyelin (SM). It may also act on ceramide phosphoethanolamine (CPE), lysophosphatidylcholine (LPC) and lysophosphatidylethanolamine (LPE), but not on lysophosphatidylserine (LPS), and lysophosphatidylglycerol (LPG). It acts by transphosphatidylation, releasing exclusively cyclic phosphate products as second products. It induces complement-dependent hemolysis, dermonecrosis, vascular permeability and platelet aggregation. This is Dermonecrotic toxin LiSicTox-alphaIA2ai from Loxosceles intermedia (Brown spider).